The sequence spans 309 residues: Probable pyridoxal 5'-phosphate synthase subunit PDX1 (309 aa).

Residue Asp-40 coordinates D-ribose 5-phosphate. Catalysis depends on Lys-97, which acts as the Schiff-base intermediate with D-ribose 5-phosphate. Gly-169 contacts D-ribose 5-phosphate. Residue Arg-181 participates in D-glyceraldehyde 3-phosphate binding. D-ribose 5-phosphate is bound by residues Gly-230 and 251–252; that span reads GS.

This sequence belongs to the PdxS/SNZ family.

The enzyme catalyses aldehydo-D-ribose 5-phosphate + D-glyceraldehyde 3-phosphate + L-glutamine = pyridoxal 5'-phosphate + L-glutamate + phosphate + 3 H2O + H(+). It functions in the pathway cofactor biosynthesis; pyridoxal 5'-phosphate biosynthesis. In terms of biological role, catalyzes the formation of pyridoxal 5'-phosphate from ribose 5-phosphate (RBP), glyceraldehyde 3-phosphate (G3P) and ammonia. The ammonia is provided by PDX2. Can also use ribulose 5-phosphate and dihydroxyacetone phosphate as substrates, resulting from enzyme-catalyzed isomerization of RBP and G3P, respectively. Also plays an indirect role in resistance to singlet oxygen-generating photosensitizers. This is Probable pyridoxal 5'-phosphate synthase subunit PDX1 (PDX1) from Ginkgo biloba (Ginkgo).